We begin with the raw amino-acid sequence, 100 residues long: NADH-quinone oxidoreductase subunit K (100 aa).

The next 3 membrane-spanning stretches (helical) occupy residues 1 to 21 (MIGLNHYLIVSGLLFCIGLAG), 28 to 48 (ILLLFFSTEIMLNAINIGFIA), and 64 to 84 (FIIAIAASEVAIGLGLVILWF).

Belongs to the complex I subunit 4L family. NDH-1 is composed of 14 different subunits. Subunits NuoA, H, J, K, L, M, N constitute the membrane sector of the complex.

It is found in the cell inner membrane. It carries out the reaction a quinone + NADH + 5 H(+)(in) = a quinol + NAD(+) + 4 H(+)(out). In terms of biological role, NDH-1 shuttles electrons from NADH, via FMN and iron-sulfur (Fe-S) centers, to quinones in the respiratory chain. The immediate electron acceptor for the enzyme in this species is believed to be ubiquinone. Couples the redox reaction to proton translocation (for every two electrons transferred, four hydrogen ions are translocated across the cytoplasmic membrane), and thus conserves the redox energy in a proton gradient. In Helicobacter acinonychis (strain Sheeba), this protein is NADH-quinone oxidoreductase subunit K.